We begin with the raw amino-acid sequence, 397 residues long: Elongation factor Tu (397 aa).

The 197-residue stretch at 10–206 (KPHVNIGTIG…AVDEYIPTPE (197 aa)) folds into the tr-type G domain. A G1 region spans residues 19–26 (GHIDHGKT). 19-26 (GHIDHGKT) is a GTP binding site. T26 provides a ligand contact to Mg(2+). The tract at residues 62–66 (GITIS) is G2. The G3 stretch occupies residues 83–86 (DCPG). GTP is bound by residues 83–87 (DCPGH) and 138–141 (NKCD). The segment at 138 to 141 (NKCD) is G4. Residues 176 to 178 (AAF) are G5.

The protein belongs to the TRAFAC class translation factor GTPase superfamily. Classic translation factor GTPase family. EF-Tu/EF-1A subfamily. Monomer.

It is found in the cytoplasm. It carries out the reaction GTP + H2O = GDP + phosphate + H(+). GTP hydrolase that promotes the GTP-dependent binding of aminoacyl-tRNA to the A-site of ribosomes during protein biosynthesis. The sequence is that of Elongation factor Tu from Nocardioides sp. (strain ATCC BAA-499 / JS614).